The sequence spans 379 residues: Sialidase-2 (379 aa).

The FRIP motif signature appears at 20 to 23 (YRIP). Substrate contacts are provided by R21 and R41. The Proton acceptor role is filled by D46. The stretch at 127-138 (ITSTDHGKTWSA) is one BNR 1 repeat. 2 residues coordinate substrate: Y179 and Y181. Residues 197–208 (FLSHDHGSTWEL) form a BNR 2 repeat. Residues E218, R237, and R303 each coordinate substrate. Residue Y333 is the Nucleophile of the active site. E354 is a catalytic residue.

Belongs to the glycosyl hydrolase 33 family.

It is found in the cytoplasm. The enzyme catalyses Hydrolysis of alpha-(2-&gt;3)-, alpha-(2-&gt;6)-, alpha-(2-&gt;8)- glycosidic linkages of terminal sialic acid residues in oligosaccharides, glycoproteins, glycolipids, colominic acid and synthetic substrates.. In terms of biological role, catalyzes the removal of sialic acid (N-acetylneuraminic acid) moieties from glycoproteins, oligosaccharides and gangliosides. In Cricetulus griseus (Chinese hamster), this protein is Sialidase-2 (NEU2).